A 2527-amino-acid chain; its full sequence is Highly reducing polyketide synthase poxF (2527 aa).

One can recognise a Ketosynthase family 3 (KS3) domain in the interval 20–445 (VMPIAIIGMA…GANAHVIVES (426 aa)). Catalysis depends on for beta-ketoacyl synthase activity residues Cys193, His328, and His368. The interval 560–882 (VFTGQGAQWF…TYASCLSRGQ (323 aa)) is malonyl-CoA:ACP transacylase (MAT) domain. The interval 951–1086 (HDLLGVPAAG…GLCCTPSPAQ (136 aa)) is N-terminal hotdog fold. The interval 951 to 1243 (HDLLGVPAAG…SVRVINNAGT (293 aa)) is dehydratase (DH) domain. Residues 951 to 1270 (HDLLGVPAAG…CQSLGSSAVV (320 aa)) enclose the PKS/mFAS DH domain. His983 serves as the catalytic Proton acceptor; for dehydratase activity. The segment at 1108–1270 (AWRILNPADT…CQSLGSSAVV (163 aa)) is C-terminal hotdog fold. Residue Asp1174 is the Proton donor; for dehydratase activity of the active site. A methyltransferase (CMet) domain region spans residues 1406-1587 (EDQAEWSSVS…RLLAKAGFEP (182 aa)). An enoyl reductase (ER) (ER) domain region spans residues 1823-2137 (GLLNSLVFTE…TGKHMGKIVL (315 aa)). A ketoreductase (KR) domain region spans residues 2162–2339 (TYLLVGGVGG…AVSIDLGMVS (178 aa)). The Carrier domain occupies 2445–2522 (EVTTLIQSAL…GLAGQMAKKS (78 aa)). Ser2482 bears the O-(pantetheine 4'-phosphoryl)serine mark.

Its pathway is secondary metabolite biosynthesis. In terms of biological role, highly reducing polyketide synthase; part of the gene cluster that mediates the biosynthesis of oxaleimides, cytotoxic compounds containing an unusual disubstituted succinimide moiety. The first step of the pathway is provided by the HR-PKS poxF that serves in a new mode of collaborative biosynthesis with the PKS-NRPS poxE, by providing the olefin containing amino acid substrate via the synthesis of an ACP-bound dec-4-enoate. The cytochrome P450 monooxygenase poxM-catalyzed oxidation at the alpha-position creates the enzyme-bound 2-hydroxydec-4-enoyl-ACP thioester, which may be prone to spontaneous hydrolysis to yield 2-hydroxydec-4-enoic acid due to increased electrophilicity of the carbonyl. 2-hydroxydec-4-enoic acid can then be further oxidized by poxM to yield the alpha-ketoacid 2-oxodec-4-enoicacid, which is reductively aminated by the aminotransferase poxL to yield (S,E)-2-aminodec-4-enoic acid. The Hybrid PKS-NRPS synthetase poxE then performs condensation between the octaketide product of its PKS modules and the amino group of (S,E)-2-aminodec-4-enoic acid which is activated and incorporated by the adenylation domain. The resulting aminoacyl product can be cyclized by the Diels-Alderase PoxQ and reductively released by the reductive (R) domain of poxE to yield an aldehyde intermediate. The released aldehyde is then substrate for a Knoevenagel condensation by the hydrolyase poxO followed by an oxidation at the 5-position of the pyrrolidone ring. The presence of the olefin from the amino acid building block allows for migration of the substituted allyl group to occur. This allylic transposition reaction takes place in a conjugate addition, semipinacol-like fashion to yield a succinimide intermediate. Iterative two-electron oxidations of the C7 methyl of the succinimide intermediate to the carboxylic acid can be catalyzed by one of two remaining cytochrome P450 monooxygenasess poxC or poxD to yield oxaleimide A. Subsequent oxidation yields the maleimide scaffold oxaleimide I. Both oxaleimide A and oxaleimide I can undergo oxidative modifications in the decalin ring to yield the series of products oxaleimides B to H. This chain is Highly reducing polyketide synthase poxF, found in Penicillium oxalicum.